A 556-amino-acid polypeptide reads, in one-letter code: Arginine--tRNA ligase (556 aa).

The 'HIGH' region signature appears at 132-142 (ANPTGDLHLGH).

It belongs to the class-I aminoacyl-tRNA synthetase family. Monomer.

Its subcellular location is the cytoplasm. It carries out the reaction tRNA(Arg) + L-arginine + ATP = L-arginyl-tRNA(Arg) + AMP + diphosphate. The protein is Arginine--tRNA ligase of Listeria welshimeri serovar 6b (strain ATCC 35897 / DSM 20650 / CCUG 15529 / CIP 8149 / NCTC 11857 / SLCC 5334 / V8).